We begin with the raw amino-acid sequence, 363 residues long: Probable aminomethyltransferase (363 aa).

Belongs to the GcvT family. In terms of assembly, the glycine cleavage system is composed of four proteins: P, T, L and H.

It carries out the reaction N(6)-[(R)-S(8)-aminomethyldihydrolipoyl]-L-lysyl-[protein] + (6S)-5,6,7,8-tetrahydrofolate = N(6)-[(R)-dihydrolipoyl]-L-lysyl-[protein] + (6R)-5,10-methylene-5,6,7,8-tetrahydrofolate + NH4(+). The glycine cleavage system catalyzes the degradation of glycine. The sequence is that of Probable aminomethyltransferase from Halobacterium salinarum (strain ATCC 29341 / DSM 671 / R1).